The sequence spans 134 residues: Ribosome-binding factor A (134 aa).

Positions Glu-115–Asp-134 are disordered.

Belongs to the RbfA family. In terms of assembly, monomer. Binds 30S ribosomal subunits, but not 50S ribosomal subunits or 70S ribosomes.

It is found in the cytoplasm. Functionally, one of several proteins that assist in the late maturation steps of the functional core of the 30S ribosomal subunit. Associates with free 30S ribosomal subunits (but not with 30S subunits that are part of 70S ribosomes or polysomes). Required for efficient processing of 16S rRNA. May interact with the 5'-terminal helix region of 16S rRNA. The chain is Ribosome-binding factor A from Synechococcus sp. (strain CC9902).